Consider the following 129-residue polypeptide: uncharacterized protein (129 aa).

The first 24 residues, 1-24 (MAFGWHSMHGSIIWFLQIAQLSTA), serve as a signal peptide directing secretion. Transmembrane regions (helical) follow at residues 38-58 (ISNLFFLVSTGALWFELCAIF) and 95-115 (IAHIEAHTSIVGFMISLFTPL).

The protein resides in the membrane. This is an uncharacterized protein from Saccharomyces cerevisiae (strain ATCC 204508 / S288c) (Baker's yeast).